A 186-amino-acid chain; its full sequence is Small ribosomal subunit protein uS5 (186 aa).

An S5 DRBM domain is found at 20 to 83 (FVDKLVHINR…EAAKRDMIFV (64 aa)).

The protein belongs to the universal ribosomal protein uS5 family. Part of the 30S ribosomal subunit. Contacts proteins S4 and S8.

In terms of biological role, with S4 and S12 plays an important role in translational accuracy. Located at the back of the 30S subunit body where it stabilizes the conformation of the head with respect to the body. In Brucella abortus (strain S19), this protein is Small ribosomal subunit protein uS5.